We begin with the raw amino-acid sequence, 86 residues long: Small muscular protein (86 aa).

Positions 20–64 are disordered; it reads MGAFRPGAGQPPRRKECTPEVEEGVPPTSDEEKKPIPGAKKLPGP.

It belongs to the SMPX family.

Its function is as follows. Plays a role in the regulatory network through which muscle cells coordinate their structural and functional states during growth, adaptation, and repair. This is Small muscular protein (SMPX) from Pongo abelii (Sumatran orangutan).